A 100-amino-acid polypeptide reads, in one-letter code: NADH-quinone oxidoreductase subunit K 2 (100 aa).

The next 3 membrane-spanning stretches (helical) occupy residues 2 to 22 (LAIE…TIGV), 29 to 49 (IVIF…FIAF), and 61 to 81 (FVFF…ALMI).

Belongs to the complex I subunit 4L family. NDH-1 is composed of 14 different subunits. Subunits NuoA, H, J, K, L, M, N constitute the membrane sector of the complex.

The protein resides in the cell inner membrane. The enzyme catalyses a quinone + NADH + 5 H(+)(in) = a quinol + NAD(+) + 4 H(+)(out). Its function is as follows. NDH-1 shuttles electrons from NADH, via FMN and iron-sulfur (Fe-S) centers, to quinones in the respiratory chain. The immediate electron acceptor for the enzyme in this species is believed to be ubiquinone. Couples the redox reaction to proton translocation (for every two electrons transferred, four hydrogen ions are translocated across the cytoplasmic membrane), and thus conserves the redox energy in a proton gradient. This chain is NADH-quinone oxidoreductase subunit K 2, found in Citrifermentans bemidjiense (strain ATCC BAA-1014 / DSM 16622 / JCM 12645 / Bem) (Geobacter bemidjiensis).